Consider the following 479-residue polypeptide: Ribulose bisphosphate carboxylase large chain (479 aa).

A propeptide spanning residues 1–2 (MS) is cleaved from the precursor. Substrate is bound by residues asparagine 123 and threonine 173. The active-site Proton acceptor is lysine 175. Lysine 177 lines the substrate pocket. Residues lysine 201, aspartate 203, and glutamate 204 each contribute to the Mg(2+) site. Position 201 is an N6-carboxylysine (lysine 201). Position 208 is a phosphoserine (serine 208). The active-site Proton acceptor is the histidine 294. 2 residues coordinate substrate: arginine 295 and histidine 327. Position 330 is a phosphothreonine (threonine 330). Serine 379 contributes to the substrate binding site.

Belongs to the RuBisCO large chain family. Type I subfamily. As to quaternary structure, heterohexadecamer of 8 large chains and 8 small chains; disulfide-linked. The disulfide link is formed within the large subunit homodimers. Mg(2+) serves as cofactor. Post-translationally, the disulfide bond which can form in the large chain dimeric partners within the hexadecamer appears to be associated with oxidative stress and protein turnover.

It localises to the plastid. The protein resides in the chloroplast. The catalysed reaction is 2 (2R)-3-phosphoglycerate + 2 H(+) = D-ribulose 1,5-bisphosphate + CO2 + H2O. It catalyses the reaction D-ribulose 1,5-bisphosphate + O2 = 2-phosphoglycolate + (2R)-3-phosphoglycerate + 2 H(+). Functionally, ruBisCO catalyzes two reactions: the carboxylation of D-ribulose 1,5-bisphosphate, the primary event in carbon dioxide fixation, as well as the oxidative fragmentation of the pentose substrate in the photorespiration process. Both reactions occur simultaneously and in competition at the same active site. The polypeptide is Ribulose bisphosphate carboxylase large chain (Draba nemorosa (Woodland whitlowgrass)).